The chain runs to 137 residues: Large ribosomal subunit protein uL16 (137 aa).

It belongs to the universal ribosomal protein uL16 family. As to quaternary structure, part of the 50S ribosomal subunit.

In terms of biological role, binds 23S rRNA and is also seen to make contacts with the A and possibly P site tRNAs. The polypeptide is Large ribosomal subunit protein uL16 (Pseudomonas paraeruginosa (strain DSM 24068 / PA7) (Pseudomonas aeruginosa (strain PA7))).